A 78-amino-acid chain; its full sequence is Probable [Fe-S]-dependent transcriptional repressor (78 aa).

The iron-sulfur cluster site is built by C56, C61, C64, and C70.

It belongs to the FeoC family.

In terms of biological role, may function as a transcriptional regulator that controls feoABC expression. The sequence is that of Probable [Fe-S]-dependent transcriptional repressor from Escherichia coli (strain UTI89 / UPEC).